A 212-amino-acid chain; its full sequence is Golgi-associated RAB2 interactor protein 5A (212 aa).

Disordered stretches follow at residues 1–21 and 162–212; these read MKGGRDLKAARGGADRPLAPA and PFTH…LWGL. Acidic residues predominate over residues 169–185; that stretch reads APEEEEEEEEEEEEEEV.

The protein belongs to the GARIN family. In terms of assembly, interacts (via N-terminus) with RAB2B (in GTP-bound form). In terms of tissue distribution, expressed in testis (at protein level).

It is found in the golgi apparatus. In terms of biological role, RAB2B effector protein which promotes cytosolic DNA-induced innate immune responses. Regulates IFN responses against DNA viruses by regulating the CGAS-STING signaling axis. This is Golgi-associated RAB2 interactor protein 5A from Mus musculus (Mouse).